A 322-amino-acid polypeptide reads, in one-letter code: Myeloid-associated differentiation marker (322 aa).

A compositionally biased stretch (low complexity) spans 1–18 (MPVTVTRTTITTTTTSSS). Residues 1–21 (MPVTVTRTTITTTTTSSSGLG) form a disordered region. The residue at position 22 (Ser-22) is a Phosphoserine. MARVEL domains are found at residues 31–163 (ALTQ…ARPG) and 168–319 (YMAT…HLVF). Helical transmembrane passes span 41–61 (LLQL…GAWT), 70–90 (FTWC…LCGL), 101–121 (FPIT…IIYP), 137–157 (AIAA…EVAW), 171–191 (TVPG…FAFI), 203–223 (LEWC…AILL), 239–259 (FLSG…VLWP), and 294–314 (LAVA…LVHS).

This sequence belongs to the MAL family. In terms of tissue distribution, widely expressed. Not detected in thymus.

The protein localises to the membrane. The polypeptide is Myeloid-associated differentiation marker (MYADM) (Homo sapiens (Human)).